The primary structure comprises 300 residues: N-acetylmuramic acid 6-phosphate etherase 1 (300 aa).

The 164-residue stretch at 57 to 220 folds into the SIS domain; the sequence is IATAFAQGGR…TTGAMIKSGK (164 aa). Residue Glu85 is the Proton donor of the active site. Glu116 is an active-site residue.

The protein belongs to the GCKR-like family. MurNAc-6-P etherase subfamily. Homodimer.

It catalyses the reaction N-acetyl-D-muramate 6-phosphate + H2O = N-acetyl-D-glucosamine 6-phosphate + (R)-lactate. It participates in amino-sugar metabolism; 1,6-anhydro-N-acetylmuramate degradation. Its pathway is amino-sugar metabolism; N-acetylmuramate degradation. It functions in the pathway cell wall biogenesis; peptidoglycan recycling. Its function is as follows. Specifically catalyzes the cleavage of the D-lactyl ether substituent of MurNAc 6-phosphate, producing GlcNAc 6-phosphate and D-lactate. Together with AnmK, is also required for the utilization of anhydro-N-acetylmuramic acid (anhMurNAc) either imported from the medium or derived from its own cell wall murein, and thus plays a role in cell wall recycling. The sequence is that of N-acetylmuramic acid 6-phosphate etherase 1 from Vibrio cholerae serotype O1 (strain ATCC 39315 / El Tor Inaba N16961).